The primary structure comprises 294 residues: Farnesyl diphosphate synthase (294 aa).

Lys45, Arg48, and His77 together coordinate isopentenyl diphosphate. Positions 84 and 90 each coordinate Mg(2+). A (2E)-geranyl diphosphate-binding site is contributed by Arg95. Arg96 is an isopentenyl diphosphate binding site. Lys181, Thr182, and Gln220 together coordinate (2E)-geranyl diphosphate.

It belongs to the FPP/GGPP synthase family. The cofactor is Mg(2+).

The protein localises to the cytoplasm. It catalyses the reaction isopentenyl diphosphate + (2E)-geranyl diphosphate = (2E,6E)-farnesyl diphosphate + diphosphate. The polypeptide is Farnesyl diphosphate synthase (ispA) (Buchnera aphidicola subsp. Schizaphis graminum (strain Sg)).